The chain runs to 671 residues: Leucine aminopeptidase 2 (671 aa).

Residues 184–186 (QLE) and 311–316 (PYGGME) contribute to the substrate site. A Zn(2+)-binding site is contributed by His-340. Glu-341 functions as the Proton acceptor in the catalytic mechanism. Zn(2+) is bound by residues His-344 and Glu-363. The active-site Proton donor is Tyr-429.

It belongs to the peptidase M1 family. Zn(2+) serves as cofactor.

The protein localises to the cytoplasm. Its subcellular location is the nucleus. It catalyses the reaction an epoxide + H2O = an ethanediol. Its activity is regulated as follows. Inhibited by 3-(4-benzyloxyphenyl)-2-(R)-amino-1-propanethiol (thioamine) and N-hydroxy-N-(2-(S)-amino-3-(4-benzyloxyphenyl)propyl)-5-carboxypen-tanamide (hydroxamic acid). The aminopeptidase activity is stimulated by LTA(4). Its function is as follows. Aminopeptidase that preferentially cleaves di- and tripeptides. Also has low epoxide hydrolase activity (in vitro). Can hydrolyze the epoxide leukotriene LTA(4) but it forms preferentially 5,6-dihydroxy-7,9,11,14-eicosatetraenoic acid rather than the cytokine leukotriene B(4) as the product compared to the homologous mammalian enzyme (in vitro). The chain is Leucine aminopeptidase 2 from Saccharomyces cerevisiae (strain YJM789) (Baker's yeast).